The following is an 826-amino-acid chain: Ribosome-releasing factor 2, mitochondrial (826 aa).

A mitochondrion-targeting transit peptide spans 1-44 (MIVRNLLGKNRLCCLQPKLLLSTLSQRPQLQLSLQLLCRATRLY). One can recognise a tr-type G domain in the interval 53–340 (PKTRNIGIIA…GITNYLPSPL (288 aa)). GTP contacts are provided by residues 62-69 (AHIDAGKT), 126-130 (DTPGH), and 180-183 (NKMD).

This sequence belongs to the TRAFAC class translation factor GTPase superfamily. Classic translation factor GTPase family. EF-G/EF-2 subfamily.

Its subcellular location is the mitochondrion. Functionally, mitochondrial GTPase that mediates the disassembly of ribosomes from messenger RNA at the termination of mitochondrial protein biosynthesis. Not involved in the GTP-dependent ribosomal translocation step during translation elongation. In Lodderomyces elongisporus (strain ATCC 11503 / CBS 2605 / JCM 1781 / NBRC 1676 / NRRL YB-4239) (Yeast), this protein is Ribosome-releasing factor 2, mitochondrial.